We begin with the raw amino-acid sequence, 261 residues long: MASPDWGYDDKNGPEQWSKLYPIANGNNQSPVDIKTSETKHDTSLKPISVSYNPATAKEIINVGHSFHVTFEDNDNRSVLKGGPLSDSYRLFQFHFHWGSTNEHGSEHTVDGVKYSAELHLTHWNSAKYSSLAEAASKADGLAVIGVLMKVGEANPKLQKILDALQAIKTKGKRAPFTNFDPSTLLPSSLDFWTYPGSLTHPPLYESVTWIICKESISVSSEQLAQFRSLLSNVEGDNAVPMQHNNRPTQPLKGRTVRASF.

Residues 1 to 31 (MASPDWGYDDKNGPEQWSKLYPIANGNNQSP) are disordered. Alanine 2 is modified (N-acetylalanine). The Alpha-carbonic anhydrase domain occupies 4-261 (PDWGYDDKNG…LKGRTVRASF (258 aa)). Histidine 65 serves as the catalytic Proton donor/acceptor. Residues histidine 95, histidine 97, and histidine 120 each coordinate Zn(2+). Substrate is bound by residues threonine 200 and 200–201 (TH). Residues 240-261 (VPMQHNNRPTQPLKGRTVRASF) are disordered.

Belongs to the alpha-carbonic anhydrase family. Requires Zn(2+) as cofactor.

The protein localises to the cytoplasm. It catalyses the reaction hydrogencarbonate + H(+) = CO2 + H2O. The enzyme catalyses urea = cyanamide + H2O. With respect to regulation, inhibited by acetazolamide. In terms of biological role, catalyzes the reversible hydration of carbon dioxide. Can hydrate cyanamide to urea. The protein is Carbonic anhydrase 1 (CA1) of Gorilla gorilla gorilla (Western lowland gorilla).